The sequence spans 422 residues: Beta-1,3-galactosyltransferase 2 (422 aa).

Over 1–20 (MLQWRRRHCCFAKMTWSPKR) the chain is Cytoplasmic. The helical; Signal-anchor for type II membrane protein transmembrane segment at 21 to 43 (SLLRTPLTGVLSLVFLFAMFLFF) threads the bilayer. Topologically, residues 44–422 (NHHDWLPGRP…AGRYRHRKLH (379 aa)) are lumenal. 5 N-linked (GlcNAc...) asparagine glycosylation sites follow: Asn75, Asn98, Asn119, Asn176, and Asn226. The interval 91–110 (LRPHTASNSSNTELSPQGVT) is disordered. The span at 95 to 110 (TASNSSNTELSPQGVT) shows a compositional bias: polar residues.

Belongs to the glycosyltransferase 31 family. The cofactor is Mn(2+). In terms of tissue distribution, detected in brain and heart.

The protein resides in the golgi apparatus membrane. The catalysed reaction is an N-acetyl-beta-D-glucosaminyl derivative + UDP-alpha-D-galactose = a beta-D-galactosyl-(1-&gt;3)-N-acetyl-beta-D-glucosaminyl derivative + UDP + H(+). It carries out the reaction a beta-D-GlcNAc-(1-&gt;3)-beta-D-Gal-(1-&gt;4)-beta-D-Glc-(1&lt;-&gt;1)-Cer(d18:1(4E)) + UDP-alpha-D-galactose = a beta-D-Gal-(1-&gt;3)-beta-D-GlcNAc-(1-&gt;3)-beta-D-Gal-(1-&gt;4)-beta-D-Glc-(1&lt;-&gt;1')-Cer(d18:1(4E)) + UDP + H(+). The enzyme catalyses a neolactoside IV(3)-beta-GlcNAc-nLc4Cer(d18:1(4E)) + UDP-alpha-D-galactose = a neolactoside IV(3)-beta-[Gal-beta-(1-&gt;3)-GlcNAc]-nLc4Cer(d18:1(4E)) + UDP + H(+). The protein operates within protein modification; protein glycosylation. In terms of biological role, beta-1,3-galactosyltransferase that transfers galactose from UDP-galactose to substrates with a terminal beta-N-acetylglucosamine (beta-GlcNAc) residue. Can also utilize substrates with a terminal galactose residue, albeit with lower efficiency. Involved in the biosynthesis of the carbohydrate moieties of glycolipids and glycoproteins. In Mus musculus (Mouse), this protein is Beta-1,3-galactosyltransferase 2.